A 367-amino-acid chain; its full sequence is Anhydro-N-acetylmuramic acid kinase (367 aa).

Position 11-18 (11-18 (GTSLDGVD)) interacts with ATP.

This sequence belongs to the anhydro-N-acetylmuramic acid kinase family.

The catalysed reaction is 1,6-anhydro-N-acetyl-beta-muramate + ATP + H2O = N-acetyl-D-muramate 6-phosphate + ADP + H(+). It participates in amino-sugar metabolism; 1,6-anhydro-N-acetylmuramate degradation. It functions in the pathway cell wall biogenesis; peptidoglycan recycling. Its function is as follows. Catalyzes the specific phosphorylation of 1,6-anhydro-N-acetylmuramic acid (anhMurNAc) with the simultaneous cleavage of the 1,6-anhydro ring, generating MurNAc-6-P. Is required for the utilization of anhMurNAc either imported from the medium or derived from its own cell wall murein, and thus plays a role in cell wall recycling. The sequence is that of Anhydro-N-acetylmuramic acid kinase from Rhodopseudomonas palustris (strain ATCC BAA-98 / CGA009).